Here is a 363-residue protein sequence, read N- to C-terminus: Disease resistance protein RBA1 (363 aa).

Residues 12–175 (PVPKVFLSFR…EIVKEVERVL (164 aa)) form the TIR domain. NAD(+) contacts are provided by residues 21-26 (RGEEIR) and G53. E86 is an active-site residue.

Homooligomer; homooligomerization is required for activity.

The protein resides in the cytoplasm. The protein localises to the nucleus. Its subcellular location is the nucleoplasm. It carries out the reaction NAD(+) + H2O = ADP-D-ribose + nicotinamide + H(+). The enzyme catalyses NADP(+) + H2O = ADP-D-ribose 2'-phosphate + nicotinamide + H(+). In terms of biological role, disease resistance (R) protein that specifically recognizes the HopBA1 type III effector protein from P.syringae, and triggers cell death. Acts as a NAD(+) hydrolase (NADase): in response to pathogen-recognition, catalyzes cleavage of NAD(+) into ADP-D-ribose (ADPR) and nicotinamide; NAD(+) cleavage triggering a defense system that promotes cell death. In addition to ADPR, also generates a cyclization variant of cyclic ADPR (cADPR), termed v-cADPR, for which the cyclizing bond is unknown. Also able to hydrolyze NADP(+), but not other NAD(+)-related molecules. The sequence is that of Disease resistance protein RBA1 from Arabidopsis thaliana (Mouse-ear cress).